Here is a 255-residue protein sequence, read N- to C-terminus: MSTREENVYMAKLAEQAERYEEMVEFMEKVAKTVDVEELSVEERNLLSVAYKNVIGARRASWRIISSIEQKEESKGNEDHVAIIKDYRGKIESELSKICDGILNVLEAHLIPSASPAESKVFYLKMKGDYHRYLAEFKAGAERKEAAESTLVAYKSASDIATAELAPTHPIRLGLALNFSVFYYEILNSPDRACSLAKQAFDDAIAELDTLGEESYKDSTLIMQLLRDNLTLWTSDMTDEAGDEIKEASKPDGAE.

Phosphoserine is present on Ser66. Phosphothreonine is present on Thr162. Phosphoserine is present on Ser189. Phosphothreonine is present on residues Thr210 and Thr238.

This sequence belongs to the 14-3-3 family. As to quaternary structure, component of a DNA binding complex that binds to the G box. Interacts with IDH3, AGT3, GLN1-1, GLN1-2, GLN1-4, SAM1, SAM2, MDH1, METK3 and MDH2. Binds to 1-aminocyclopropane-1-carboxylate synthases (ACS) such as ACS2, ACS5, ACS6, ACS8, and ACS11. Interacts with FD. Interacts with DREB1A and DREB1B in the nucleus. Interacts with CINV1.

It localises to the cytoplasm. It is found in the nucleus. In terms of biological role, is associated with a DNA binding complex that binds to the G box, a well-characterized cis-acting DNA regulatory element found in plant genes. Involved in the regulation of nutrient metabolism. Reciprocal negative transcription regulation of miR396. Negative regulator of constitutive freezing tolerance and cold acclimation by controlling cold-induced gene expression partially through an ethylene (ET)-dependent pathway; prevents ethylene (ET) biosynthesis, probably by binding 1-aminocyclopropane-1-carboxylate synthases (ACS) to reduce their stability, thus contributing to establish adequate ET levels under both standard and low-temperature conditions. The polypeptide is 14-3-3-like protein GF14 psi (Arabidopsis thaliana (Mouse-ear cress)).